We begin with the raw amino-acid sequence, 1058 residues long: Carbamoyl phosphate synthase pyrimidine-specific large chain (1058 aa).

A carboxyphosphate synthetic domain region spans residues 1–401; the sequence is MPKRTDIHKI…ATLKAVRSLE (401 aa). Residues arginine 129, arginine 169, glycine 175, glycine 176, glutamine 208, isoleucine 210, glutamate 215, glycine 241, isoleucine 242, histidine 243, glutamine 284, and glutamate 298 each contribute to the ATP site. Residues 133–327 form the ATP-grasp 1 domain; that stretch reads KALMEELGEP…IAKMAAKIAV (195 aa). Positions 284, 298, and 300 each coordinate Mg(2+). Positions 284, 298, and 300 each coordinate Mn(2+). The oligomerization domain stretch occupies residues 402–546; sequence IGVHHVEEPA…YGTYEFENES (145 aa). Residues 547 to 929 are carbamoyl phosphate synthetic domain; sequence IVTKRPSVLV…ALYKAFEAAK (383 aa). In terms of domain architecture, ATP-grasp 2 spans 671–861; it reads DKVIKALAIP…MAQVATRAIL (191 aa). Residues arginine 707, serine 746, leucine 748, glutamate 752, glycine 777, valine 778, histidine 779, serine 780, glutamine 820, and glutamate 832 each coordinate ATP. Glutamine 820, glutamate 832, and asparagine 834 together coordinate Mg(2+). Mn(2+)-binding residues include glutamine 820, glutamate 832, and asparagine 834. An MGS-like domain is found at 930–1058; sequence LHVPSHGNVL…ESQSFVTQAL (129 aa). The allosteric domain stretch occupies residues 930–1058; it reads LHVPSHGNVL…ESQSFVTQAL (129 aa).

It belongs to the CarB family. As to quaternary structure, composed of two chains; the small (or glutamine) chain promotes the hydrolysis of glutamine to ammonia, which is used by the large (or ammonia) chain to synthesize carbamoyl phosphate. Tetramer of heterodimers (alpha,beta)4. Mg(2+) is required as a cofactor. Mn(2+) serves as cofactor.

The enzyme catalyses hydrogencarbonate + L-glutamine + 2 ATP + H2O = carbamoyl phosphate + L-glutamate + 2 ADP + phosphate + 2 H(+). It carries out the reaction hydrogencarbonate + NH4(+) + 2 ATP = carbamoyl phosphate + 2 ADP + phosphate + 2 H(+). It participates in amino-acid biosynthesis; L-arginine biosynthesis; carbamoyl phosphate from bicarbonate: step 1/1. The protein operates within pyrimidine metabolism; UMP biosynthesis via de novo pathway; (S)-dihydroorotate from bicarbonate: step 1/3. Small subunit of the glutamine-dependent carbamoyl phosphate synthetase (CPSase). CPSase catalyzes the formation of carbamoyl phosphate from the ammonia moiety of glutamine, carbonate, and phosphate donated by ATP, constituting the first step of the biosynthetic pathway leading to pyrimidine nucleotides. The large subunit (synthetase) binds the substrates ammonia (free or transferred from glutamine from the small subunit), hydrogencarbonate and ATP and carries out an ATP-coupled ligase reaction, activating hydrogencarbonate by forming carboxy phosphate which reacts with ammonia to form carbamoyl phosphate. The chain is Carbamoyl phosphate synthase pyrimidine-specific large chain (pyrAB) from Lactiplantibacillus plantarum (strain ATCC BAA-793 / NCIMB 8826 / WCFS1) (Lactobacillus plantarum).